Reading from the N-terminus, the 363-residue chain is Pyrimidine monooxygenase RutA (363 aa).

FMN is bound by residues 49–50 (IK), Asn115, Glu124, 140–141 (RY), and Ser190.

The protein belongs to the NtaA/SnaA/DszA monooxygenase family. RutA subfamily.

The catalysed reaction is uracil + FMNH2 + NADH + O2 = (Z)-3-ureidoacrylate + FMN + NAD(+) + H2O + H(+). It catalyses the reaction thymine + FMNH2 + NADH + O2 = (Z)-2-methylureidoacrylate + FMN + NAD(+) + H2O + H(+). In terms of biological role, catalyzes the pyrimidine ring opening between N-3 and C-4 by an unusual flavin hydroperoxide-catalyzed mechanism, adding oxygen atoms in the process to yield ureidoacrylate peracid, that immediately reacts with FMN forming ureidoacrylate and FMN-N(5)-oxide. The FMN-N(5)-oxide reacts spontaneously with NADH to produce FMN. Requires the flavin reductase RutF to regenerate FMN in vivo. The polypeptide is Pyrimidine monooxygenase RutA (Escherichia coli O157:H7 (strain EC4115 / EHEC)).